Consider the following 331-residue polypeptide: MSLDPVKKLVILAKSNIMQSNNMDALEAIRIKFLGKKGYLNQHIKNLNDTSLDIKPKLGAAINQAKEDIYTLLIERKNILQSKNIKNTLITDTLDVTLPGRLSDIGTHHPITSTIKRMKIFFNTLGFSVIHGPEIEDDYFNFDALNIPKYHPSRDEHDTFWFDEKRLLRTHTSGVQIRAMINKTPPIRIISFGRVYRKDYDQHHTPMFHQMEGLIVDSNVNFSYLKKILYDFLYNFFETDIILRFRPSYFPFTEPSAEIDVMKKQETGNWLELLGCGMVHPKILHHVDIDTEKFSGFAFGIGIERLTMLQYNIDDIRVFFKNDLQFLDQFK.

Glutamate 254 contacts Mg(2+).

Belongs to the class-II aminoacyl-tRNA synthetase family. Phe-tRNA synthetase alpha subunit type 1 subfamily. Tetramer of two alpha and two beta subunits. Mg(2+) serves as cofactor.

The protein localises to the cytoplasm. The enzyme catalyses tRNA(Phe) + L-phenylalanine + ATP = L-phenylalanyl-tRNA(Phe) + AMP + diphosphate + H(+). This is Phenylalanine--tRNA ligase alpha subunit from Blochmanniella pennsylvanica (strain BPEN).